The following is a 103-amino-acid chain: Large ribosomal subunit protein uL24 (103 aa).

The protein belongs to the universal ribosomal protein uL24 family. Part of the 50S ribosomal subunit.

Its function is as follows. One of two assembly initiator proteins, it binds directly to the 5'-end of the 23S rRNA, where it nucleates assembly of the 50S subunit. Functionally, one of the proteins that surrounds the polypeptide exit tunnel on the outside of the subunit. This chain is Large ribosomal subunit protein uL24, found in Haemophilus ducreyi (strain 35000HP / ATCC 700724).